The sequence spans 349 residues: MEGFLQPVADLFGPSWPVVWTLLKIVAIVAPLMGCVAYLTLAERKVIGYMQVRIGPNRVGPFGLLQPIADGVKLLLKEIIFPSSASKGLFIVGPILALAPSLVAWAVVPFDDGLVLANVNAGLLFLLAVTSMEVYGVIVAGWASNSKYPFIGAMRAAAQMVSYEVSMGFALICVLLISSSLNLSEIVNSQGSGRFHDMGLSFLSWNWLPLLPMFVVYLISGIAETNRAPFDVVEGEAEIVAGHMVEYSGMAFALFFLAEYANMILVSILTSVLFLGGWLSPVGFLPDGFHWLALKTASILFIFLWARATFPRFRYDHIMRLGWKVFIPVTLVWVVVVAVWLMSPLSIWK.

Helical transmembrane passes span 16 to 36 (WPVV…MGCV), 88 to 108 (GLFI…WAVV), 123 to 143 (LLFL…AGWA), 157 to 177 (AAQM…VLLI), 202 to 222 (FLSW…ISGI), 264 to 284 (ILVS…PVGF), 285 to 305 (LPDG…IFLW), and 325 to 345 (VFIP…MSPL).

Belongs to the complex I subunit 1 family. In terms of assembly, NDH-1 is composed of 14 different subunits. Subunits NuoA, H, J, K, L, M, N constitute the membrane sector of the complex.

It localises to the cell inner membrane. The catalysed reaction is a quinone + NADH + 5 H(+)(in) = a quinol + NAD(+) + 4 H(+)(out). Functionally, NDH-1 shuttles electrons from NADH, via FMN and iron-sulfur (Fe-S) centers, to quinones in the respiratory chain. The immediate electron acceptor for the enzyme in this species is believed to be ubiquinone. Couples the redox reaction to proton translocation (for every two electrons transferred, four hydrogen ions are translocated across the cytoplasmic membrane), and thus conserves the redox energy in a proton gradient. This subunit may bind ubiquinone. In Azoarcus sp. (strain BH72), this protein is NADH-quinone oxidoreductase subunit H.